The sequence spans 111 residues: Secreted RxLR effector protein 81 (111 aa).

The N-terminal stretch at 1-16 is a signal peptide; it reads MLVSMLLIIFPNGVSL. Residue Asn-52 is glycosylated (N-linked (GlcNAc...) asparagine). Residues 73–92 are disordered; it reads KKFSSSDEDKSRDVRRRLRP. A RxLR-dEER motif is present at residues 88-91; the sequence is RRLR.

The protein belongs to the RxLR effector family.

The protein resides in the secreted. It is found in the host nucleus. Its subcellular location is the host cytoplasm. In terms of biological role, secreted effector that partially suppresses the host cell death induced by cell death-inducing proteins. In Plasmopara viticola (Downy mildew of grapevine), this protein is Secreted RxLR effector protein 81.